A 359-amino-acid chain; its full sequence is 3-dehydroquinate synthase (359 aa).

Residues 71 to 76 (DGEAYK), 105 to 109 (GVVGD), 129 to 130 (TT), Lys142, and Lys151 each bind NAD(+). Residues Glu184, His247, and His264 each coordinate Zn(2+).

The protein belongs to the sugar phosphate cyclases superfamily. Dehydroquinate synthase family. Co(2+) is required as a cofactor. It depends on Zn(2+) as a cofactor. The cofactor is NAD(+).

The protein resides in the cytoplasm. The enzyme catalyses 7-phospho-2-dehydro-3-deoxy-D-arabino-heptonate = 3-dehydroquinate + phosphate. It participates in metabolic intermediate biosynthesis; chorismate biosynthesis; chorismate from D-erythrose 4-phosphate and phosphoenolpyruvate: step 2/7. Functionally, catalyzes the conversion of 3-deoxy-D-arabino-heptulosonate 7-phosphate (DAHP) to dehydroquinate (DHQ). The protein is 3-dehydroquinate synthase of Burkholderia cenocepacia (strain ATCC BAA-245 / DSM 16553 / LMG 16656 / NCTC 13227 / J2315 / CF5610) (Burkholderia cepacia (strain J2315)).